Reading from the N-terminus, the 291-residue chain is Transmembrane protein 41B (291 aa).

The segment at 1–38 (MAKGRVAERSQMGADHTTPVGDGAAGTRGPAAPGSRDY) is disordered. T18 carries the post-translational modification Phosphothreonine. Low complexity predominate over residues 21–34 (GDGAAGTRGPAAPG). At S35 the chain carries Phosphoserine. 6 consecutive transmembrane segments (helical) span residues 52–72 (MSLL…FLVY), 109–129 (FYVQ…TFAI), 147–169 (LALF…LSYL), 197–217 (LINY…FINI), 225–245 (PLKV…FVAI), and 262–282 (SWNS…PAIF). The VTT domain; required for its function in autophagy stretch occupies residues 140 to 251 (GFLYPFPLAL…FVAIKAGTTL (112 aa)).

This sequence belongs to the TMEM41 family. Interacts with VMP1. Interacts with COPA, COPB1, VDAC1 and ERLIN2. Interacts with ATG2A. Interacts with SURF4.

The protein localises to the endoplasmic reticulum membrane. Its subcellular location is the endomembrane system. It carries out the reaction a 1,2-diacyl-sn-glycero-3-phospho-L-serine(in) = a 1,2-diacyl-sn-glycero-3-phospho-L-serine(out). It catalyses the reaction cholesterol(in) = cholesterol(out). The catalysed reaction is a 1,2-diacyl-sn-glycero-3-phosphocholine(in) = a 1,2-diacyl-sn-glycero-3-phosphocholine(out). The enzyme catalyses a 1,2-diacyl-sn-glycero-3-phosphoethanolamine(in) = a 1,2-diacyl-sn-glycero-3-phosphoethanolamine(out). In terms of biological role, phospholipid scramblase involved in lipid homeostasis and membrane dynamics processes. Has phospholipid scramblase activity toward cholesterol and phosphatidylserine, as well as phosphatidylethanolamine and phosphatidylcholine. Required for autophagosome formation: participates in early stages of autophagosome biogenesis at the endoplasmic reticulum (ER) membrane by reequilibrating the leaflets of the ER as lipids are extracted by ATG2 (ATG2A or ATG2B) to mediate autophagosome assembly. In addition to autophagy, involved in other processes in which phospholipid scramblase activity is required. Required for normal motor neuron development. In Pongo abelii (Sumatran orangutan), this protein is Transmembrane protein 41B.